We begin with the raw amino-acid sequence, 472 residues long: Uronate isomerase (472 aa).

This sequence belongs to the metallo-dependent hydrolases superfamily. Uronate isomerase family.

It carries out the reaction D-glucuronate = D-fructuronate. It catalyses the reaction aldehydo-D-galacturonate = keto-D-tagaturonate. Its pathway is carbohydrate metabolism; pentose and glucuronate interconversion. The sequence is that of Uronate isomerase from Nostoc punctiforme (strain ATCC 29133 / PCC 73102).